The sequence spans 445 residues: NAD-specific glutamate dehydrogenase (445 aa).

Residue lysine 124 is part of the active site. Glycine 235–tryptophan 241 contributes to the NAD(+) binding site.

The protein belongs to the Glu/Leu/Phe/Val dehydrogenases family. Homohexamer.

It catalyses the reaction L-glutamate + NAD(+) + H2O = 2-oxoglutarate + NH4(+) + NADH + H(+). This chain is NAD-specific glutamate dehydrogenase (gdhB), found in Bacteroides fragilis (strain YCH46).